The sequence spans 913 residues: Epithelial discoidin domain-containing receptor 1 (913 aa).

The N-terminal stretch at 1–18 is a signal peptide; it reads MGPEALSSLLLLLLVASG. Topologically, residues 21–417 are extracellular; sequence DMKGHFDPAK…VAKAEGSPTA (397 aa). An F5/8 type C domain is found at 31–185; sequence CRYALGMQDR…VCLRVELYGC (155 aa). 2 disulfides stabilise this stretch: Cys31/Cys185 and Cys74/Cys177. The interval 192–367 is DS-like domain; sequence LSYTAPVGQT…LFSEISFISD (176 aa). Ca(2+) contacts are provided by Asn211, Gln230, Asp233, Val235, Tyr253, and Tyr255. Residue Asn211 is glycosylated (N-linked (GlcNAc...) asparagine). Asn260 is a glycosylation site (N-linked (GlcNAc...) asparagine). A disulfide bridge links Cys303 with Cys348. Residues Ser360 and Glu361 each contribute to the Ca(2+) site. N-linked (GlcNAc...) asparagine glycosylation is found at Asn370 and Asn394. The helical transmembrane segment at 418-438 threads the bilayer; it reads ILIGCLVAIILLLLLIIALML. The Cytoplasmic portion of the chain corresponds to 439–913; that stretch reads WRLHWRRLLS…FLAEDALNTV (475 aa). Residues 470–499 form a disordered region; sequence ILINNRPGPREPPPYQEPRPRGNPPHSAPC. Residues 479-496 are compositionally biased toward pro residues; sequence REPPPYQEPRPRGNPPHS. The PPxY motif signature appears at 481 to 484; the sequence is PPPY. A phosphotyrosine; by autocatalysis mark is found at Tyr484, Tyr513, and Tyr520. Positions 610–905 constitute a Protein kinase domain; it reads LRFKEKLGEG…PPFSQLHRFL (296 aa). Residue 616-624 participates in ATP binding; sequence LGEGQFGEV. Ser631 bears the Phosphoserine mark. Lys655 contacts ATP. Position 740 is a phosphotyrosine; by autocatalysis (Tyr740). Asp766 functions as the Proton acceptor in the catalytic mechanism. Tyr792, Tyr796, and Tyr797 each carry phosphotyrosine; by autocatalysis.

It belongs to the protein kinase superfamily. Tyr protein kinase family. Insulin receptor subfamily. In terms of assembly, homodimer. Interacts (via PPxY motif) with WWC1 (via WW domains) in a collagen-regulated manner. Forms a tripartite complex with WWC1 and PRKCZ, but predominantly in the absence of collagen. Interacts (tyrosine phosphorylated) with SHC1. Interacts with SRC. Interacts with MYH9. Interacts with CDH1. Interacts with PTPN11. Interacts with NCK2. Autophosphorylated in response to fibrillar collagen binding. Post-translationally, glycosylation of Asn-211, but apparently not of Asn-260 or Asn-394, prevents autophosphorylation from occurring in the absence of collagen. As to expression, detected in T-47D, MDA-MB-175 and HBL-100 breast carcinoma cells, A-431 epidermoid carcinoma cells, SW48 and SNU-C2B colon carcinoma cells and Hs 294T melanoma cells (at protein level). Expressed at low levels in most adult tissues and is highest in the brain, lung, placenta and kidney. Lower levels of expression are detected in melanocytes, heart, liver, skeletal muscle and pancreas. Abundant in breast carcinoma cell lines. In the colonic mucosa, expressed in epithelia but not in the connective tissue of the lamina propria. In the thyroid gland, expressed in the epithelium of the thyroid follicles. In pancreas, expressed in the islets of Langerhans cells, but not in the surrounding epithelial cells of the exocrine pancreas. In kidney, expressed in the epithelia of the distal tubules. Not expressed in connective tissue, endothelial cells, adipose tissue, muscle cells or cells of hematopoietic origin.

It is found in the cell membrane. The protein localises to the secreted. It catalyses the reaction L-tyrosyl-[protein] + ATP = O-phospho-L-tyrosyl-[protein] + ADP + H(+). With respect to regulation, inhibited by the multi-targeted cancer drugs imatinib and ponatinib. Functionally, tyrosine kinase that functions as a cell surface receptor for fibrillar collagen and regulates cell attachment to the extracellular matrix, remodeling of the extracellular matrix, cell migration, differentiation, survival and cell proliferation. Collagen binding triggers a signaling pathway that involves SRC and leads to the activation of MAP kinases. Regulates remodeling of the extracellular matrix by up-regulation of the matrix metalloproteinases MMP2, MMP7 and MMP9, and thereby facilitates cell migration and wound healing. Required for normal blastocyst implantation during pregnancy, for normal mammary gland differentiation and normal lactation. Required for normal ear morphology and normal hearing. Promotes smooth muscle cell migration, and thereby contributes to arterial wound healing. Also plays a role in tumor cell invasion. Phosphorylates PTPN11. The polypeptide is Epithelial discoidin domain-containing receptor 1 (DDR1) (Homo sapiens (Human)).